Here is a 767-residue protein sequence, read N- to C-terminus: Cap-specific mRNA (nucleoside-2'-O-)-methyltransferase 2 (767 aa).

Residues 109–322 (ELCTQAWCKF…VYVVCLRYKG (214 aa)) enclose the Adrift-type SAM-dependent 2'-O-MTase domain. K117 is an active-site residue. S-adenosyl-L-methionine-binding residues include G148, W167, and D235. Residue D235 is part of the active site. K275 functions as the Proton acceptor in the catalytic mechanism.

Its subcellular location is the nucleus. The protein localises to the cytoplasm. The enzyme catalyses a 5'-end (N(7)-methyl 5'-triphosphoguanosine)-(2'-O-methyl-ribonucleoside)-(ribonucleotide) in mRNA + S-adenosyl-L-methionine = a 5'-end (N(7)-methyl 5'-triphosphoguanosine)-(2'-O-methyl-ribonucleoside)-(2'-O-methyl-ribonucleotide) in mRNA + S-adenosyl-L-homocysteine + H(+). Its function is as follows. S-adenosyl-L-methionine-dependent methyltransferase that mediates mRNA cap2 2'-O-ribose methylation to the 5'-cap structure of mRNAs. Methylates the ribose of the second nucleotide of a m(7)GpppG-capped mRNA and small nuclear RNA (snRNA) (cap0) to produce m(7)GpppRmpNm (cap2). Recognizes a guanosine cap on RNA independently of its N(7) methylation status. Display cap2 methylation on both cap0 and cap1. Displays a preference for cap1 RNAs. The chain is Cap-specific mRNA (nucleoside-2'-O-)-methyltransferase 2 (Cmtr2) from Mus musculus (Mouse).